The sequence spans 461 residues: Putative cytochrome P450 132 (461 aa).

Cysteine 409 provides a ligand contact to heme.

This sequence belongs to the cytochrome P450 family. Heme serves as cofactor.

The chain is Putative cytochrome P450 132 (cyp132) from Mycobacterium tuberculosis (strain ATCC 25618 / H37Rv).